We begin with the raw amino-acid sequence, 133 residues long: ATP synthase epsilon chain (133 aa).

The protein belongs to the ATPase epsilon chain family. F-type ATPases have 2 components, CF(1) - the catalytic core - and CF(0) - the membrane proton channel. CF(1) has five subunits: alpha(3), beta(3), gamma(1), delta(1), epsilon(1). CF(0) has three main subunits: a, b and c.

It is found in the cell membrane. Functionally, produces ATP from ADP in the presence of a proton gradient across the membrane. This chain is ATP synthase epsilon chain, found in Clostridium perfringens (strain SM101 / Type A).